A 126-amino-acid polypeptide reads, in one-letter code: MSNVPADLKYTDEHEWVRTEADGTLTVGITDHAQSTLGDIVFLELPQVGKSVNAGDAVGVVESVKAASDIYSPVSGEVVAINEEATDSPEGVNGDAYGVWLFKLKLADGASTDKLIDAAAYSKLID.

In terms of domain architecture, Lipoyl-binding spans 24–105 (TLTVGITDHA…AYGVWLFKLK (82 aa)). The residue at position 65 (Lys-65) is an N6-lipoyllysine.

This sequence belongs to the GcvH family. As to quaternary structure, the glycine cleavage system is composed of four proteins: P, T, L and H. (R)-lipoate is required as a cofactor.

In terms of biological role, the glycine cleavage system catalyzes the degradation of glycine. The H protein shuttles the methylamine group of glycine from the P protein to the T protein. The polypeptide is Glycine cleavage system H protein (Burkholderia vietnamiensis (strain G4 / LMG 22486) (Burkholderia cepacia (strain R1808))).